The chain runs to 205 residues: Small ribosomal subunit protein uS4 (205 aa).

Positions 21-47 (GRPKSPFNKRDYGPGQHGQGRKGKPSD) are disordered. Residues 94–154 (RRLDSVVYRA…DKSKQLAIID (61 aa)) form the S4 RNA-binding domain.

It belongs to the universal ribosomal protein uS4 family. Part of the 30S ribosomal subunit. Contacts protein S5. The interaction surface between S4 and S5 is involved in control of translational fidelity.

One of the primary rRNA binding proteins, it binds directly to 16S rRNA where it nucleates assembly of the body of the 30S subunit. Its function is as follows. With S5 and S12 plays an important role in translational accuracy. This chain is Small ribosomal subunit protein uS4, found in Pelagibacter ubique (strain HTCC1062).